A 660-amino-acid chain; its full sequence is Bifunctional polymyxin resistance protein ArnA (660 aa).

Residues 1–304 form a formyltransferase ArnAFT region; it reads MKTVVFAYHD…TLGLVQGSRL (304 aa). 86–88 serves as a coordination point for (6R)-10-formyltetrahydrofolate; the sequence is HLI. The active-site Proton donor; for formyltransferase activity is the His-104. Residues Arg-114 and 136–140 contribute to the (6R)-10-formyltetrahydrofolate site; that span reads VKRAD. Residues 314–660 form a dehydrogenase ArnADH region; sequence RRTRVLILGV…RTVDLTDKPS (347 aa). NAD(+) is bound by residues Asp-347 and 368–369; that span reads DI. UDP-alpha-D-glucuronate is bound by residues Ala-393, Tyr-398, and 432-433; that span reads TS. Glu-434 (proton acceptor; for decarboxylase activity) is an active-site residue. Residues Arg-460, Asn-492, 526-535, and Tyr-613 each bind UDP-alpha-D-glucuronate; that span reads KLIDGGKQKR. Arg-619 acts as the Proton donor; for decarboxylase activity in catalysis.

This sequence in the N-terminal section; belongs to the Fmt family. UDP-L-Ara4N formyltransferase subfamily. It in the C-terminal section; belongs to the NAD(P)-dependent epimerase/dehydratase family. UDP-glucuronic acid decarboxylase subfamily. Homohexamer, formed by a dimer of trimers.

It carries out the reaction UDP-alpha-D-glucuronate + NAD(+) = UDP-beta-L-threo-pentopyranos-4-ulose + CO2 + NADH. The enzyme catalyses UDP-4-amino-4-deoxy-beta-L-arabinose + (6R)-10-formyltetrahydrofolate = UDP-4-deoxy-4-formamido-beta-L-arabinose + (6S)-5,6,7,8-tetrahydrofolate + H(+). Its pathway is nucleotide-sugar biosynthesis; UDP-4-deoxy-4-formamido-beta-L-arabinose biosynthesis; UDP-4-deoxy-4-formamido-beta-L-arabinose from UDP-alpha-D-glucuronate: step 1/3. It functions in the pathway nucleotide-sugar biosynthesis; UDP-4-deoxy-4-formamido-beta-L-arabinose biosynthesis; UDP-4-deoxy-4-formamido-beta-L-arabinose from UDP-alpha-D-glucuronate: step 3/3. The protein operates within bacterial outer membrane biogenesis; lipopolysaccharide biosynthesis. Functionally, bifunctional enzyme that catalyzes the oxidative decarboxylation of UDP-glucuronic acid (UDP-GlcUA) to UDP-4-keto-arabinose (UDP-Ara4O) and the addition of a formyl group to UDP-4-amino-4-deoxy-L-arabinose (UDP-L-Ara4N) to form UDP-L-4-formamido-arabinose (UDP-L-Ara4FN). The modified arabinose is attached to lipid A and is required for resistance to polymyxin and cationic antimicrobial peptides. In Escherichia coli O9:H4 (strain HS), this protein is Bifunctional polymyxin resistance protein ArnA.